Reading from the N-terminus, the 745-residue chain is Elongation factor G, mitochondrial (745 aa).

Residues 40–317 (ERIRNIGISA…AVLDYLPNPG (278 aa)) form the tr-type G domain. Residues 49–56 (AHIDSGKT), 116–120 (DTPGH), and 170–173 (NKLD) each bind GTP.

Belongs to the TRAFAC class translation factor GTPase superfamily. Classic translation factor GTPase family. EF-G/EF-2 subfamily.

The protein localises to the mitochondrion. The protein operates within protein biosynthesis; polypeptide chain elongation. Mitochondrial GTPase that catalyzes the GTP-dependent ribosomal translocation step during translation elongation. During this step, the ribosome changes from the pre-translocational (PRE) to the post-translocational (POST) state as the newly formed A-site-bound peptidyl-tRNA and P-site-bound deacylated tRNA move to the P and E sites, respectively. Catalyzes the coordinated movement of the two tRNA molecules, the mRNA and conformational changes in the ribosome. Essential during development as it acts as a retrograde signal from mitochondria to the nucleus to slow down cell proliferation if mitochondrial energy output is low. The chain is Elongation factor G, mitochondrial from Drosophila erecta (Fruit fly).